A 530-amino-acid chain; its full sequence is MEDDSLYLGGEWQFNHFSKLTSPRPDAAFAEIQRTSLPEKSPLSSETRVDLCDDLAPVARQLAPREKLPLSSRRPAAVGAGLQNMGNTCYLNASLQCLTYTPPLANYMLSREHSQTCQRPKCCMLCTMQAHITWALHSPGHVIQPSQALAAGFHRGKQEDAHEFLMFTVDAMKKACLPGHKQVDHHSKDTTLIHQIFGGCWRSQIKCLHCHGISDTFDPYLDIALDIQAAQSVKQALEQLVKPEELNGENAYPCGLCLQRAPASNTLTLHTSAKVLILVLKRFCDVTGNKLAKNVQYPECLDMQPYMSQQNTGPLVYVLYAVLVHAGWSCHNGYYFSYVKAQEGQWYKMDDAEVTACSITSVLSQQAYVLFYIQKSEWERHSESVSRGREPRALGAEDTDRPATQGELKRDHPCLQVPELDEHLVERATEESTLDHWKFPQEQNKMKPEFNVRKVEGTLPPNVLVIHQSKYKCGMKNHHPEQQSSLLNLSSMNSTDQESMNTGTLASLQGRTRRSKGKNKHSKRSLLVCQ.

The USP domain maps to 80 to 375 (AGLQNMGNTC…QAYVLFYIQK (296 aa)). Residues 382–392 (SESVSRGREPR) are compositionally biased toward basic and acidic residues. Disordered regions lie at residues 382 to 412 (SESVSRGREPRALGAEDTDRPATQGELKRDH) and 493 to 530 (NSTDQESMNTGTLASLQGRTRRSKGKNKHSKRSLLVCQ). The segment covering 495 to 510 (TDQESMNTGTLASLQG) has biased composition (polar residues). The segment covering 511-524 (RTRRSKGKNKHSKR) has biased composition (basic residues).

Belongs to the peptidase C19 family. USP17 subfamily.

The protein resides in the nucleus. The protein localises to the endoplasmic reticulum. The polypeptide is Inactive ubiquitin carboxyl-terminal hydrolase 17-like protein 8 (USP17L8) (Homo sapiens (Human)).